Here is a 310-residue protein sequence, read N- to C-terminus: Zinc transporter ZIP9 (310 aa).

A run of 8 helical transmembrane segments spans residues 7-27 (ISLL…IPLA), 35-55 (LKLI…AVII), 108-128 (ACIG…DQIG), 148-168 (ITTT…LGAA), 178-198 (LIVF…LVSF), 212-232 (HLLV…LGLS), 246-266 (GVAM…HVLP), and 289-309 (VEVV…VGHH).

It belongs to the ZIP transporter (TC 2.A.5) family. As to expression, expressed in brain, liver, ovary, and testis.

The protein resides in the golgi apparatus. Its subcellular location is the trans-Golgi network membrane. It localises to the cell membrane. It is found in the cytoplasm. The protein localises to the perinuclear region. The protein resides in the mitochondrion. Its subcellular location is the nucleus. It carries out the reaction Zn(2+)(in) = Zn(2+)(out). Its function is as follows. Has dual functions as a membrane-bound androgen receptor and as an androgen-dependent zinc transporter both of which are mediated through G protein activation and are required for the androgen-dependent apoptotic response. Upon androgen binding, mediates apoptosis by directly activating a stimulatory G protein that leads to increased cAMP levels and MAP kinase activity and which is accompanied by increased intracellular free zinc levels. The protein is Zinc transporter ZIP9 of Micropogonias undulatus (Atlantic croaker).